Here is an 842-residue protein sequence, read N- to C-terminus: uncharacterized protein (842 aa).

Disordered stretches follow at residues 1 to 20 (MLHF…SPKE) and 142 to 209 (NSSS…TSSS). The 388-residue stretch at 35 to 422 (TKDVTFRLVL…TAKSFHKCIL (388 aa)) folds into the uDENN FNIP1/2-type domain. Over residues 183 to 209 (ANLSSSSKNMKDSTLSSQKARSNTSSS) the composition is skewed to polar residues. The 343-residue stretch at 430 to 772 (APLIKPSVFS…CYEIHEFPSE (343 aa)) folds into the cDENN FNIP1/2-type domain. Phosphoserine is present on residues S573 and S590. In terms of domain architecture, dDENN FNIP1/2-type spans 777–842 (YAPFLLKEHH…KEVLRVCSHC (66 aa)).

The protein localises to the cytoplasm. This is an uncharacterized protein from Schizosaccharomyces pombe (strain 972 / ATCC 24843) (Fission yeast).